Reading from the N-terminus, the 265-residue chain is Small ribosomal subunit protein uS2 (265 aa).

A disordered region spans residues 226 to 265 (AAAPNSASVREEEFSAESADEGKGRRAPAKKGDKKADAAE). Residues 245-265 (DEGKGRRAPAKKGDKKADAAE) show a composition bias toward basic and acidic residues.

The protein belongs to the universal ribosomal protein uS2 family.

This chain is Small ribosomal subunit protein uS2, found in Xanthomonas euvesicatoria pv. vesicatoria (strain 85-10) (Xanthomonas campestris pv. vesicatoria).